A 791-amino-acid polypeptide reads, in one-letter code: Biofilm architecture maintenance protein MbaA (791 aa).

Positions methionine 1–serine 23 are cleaved as a signal peptide. At tyrosine 24–glutamate 259 the chain is on the periplasmic side. The chain crosses the membrane as a helical span at residues leucine 260 to tyrosine 280. Residues arginine 281–glutamine 333 enclose the HAMP domain. Residues arginine 281–arginine 791 are Cytoplasmic-facing. The GGDEF domain maps to glutamine 368 to glutamine 509. An EAL domain is found at arginine 518 to asparagine 769.

The protein localises to the cell inner membrane. Functionally, plays an essential role in the maintenance and the formation of the three-dimensional structure of the biofilms at the later stages of their development. Absence of mbaA promotes the accumulation of larger amount of biomass on the surfaces at later stage of development, results in the overproduction of an extracellular polymeric substance that accumulates in the matrix of biofilms. This yields biofilms lacking the typical structure consisting of pillars of cells separated by fluid filled channels. The polypeptide is Biofilm architecture maintenance protein MbaA (mbaA) (Vibrio cholerae serotype O1 (strain ATCC 39315 / El Tor Inaba N16961)).